The chain runs to 238 residues: Response regulator receiver protein Anae109_2439 (238 aa).

Response regulatory domains lie at 3–117 (RYLI…AAAR) and 121–228 (LVAV…ERLH). 2 positions are modified to 4-aspartylphosphate: D52 and D169.

Post-translationally, is diphosphorylated by GchK.

Functionally, member of the two-component regulatory system GcHK/Anae109_2439. Is involved in a signal transduction system responding to oxygen availability. This is Response regulator receiver protein Anae109_2439 from Anaeromyxobacter sp. (strain Fw109-5).